We begin with the raw amino-acid sequence, 202 residues long: Imidazoleglycerol-phosphate dehydratase (202 aa).

It belongs to the imidazoleglycerol-phosphate dehydratase family.

Its subcellular location is the cytoplasm. The catalysed reaction is D-erythro-1-(imidazol-4-yl)glycerol 3-phosphate = 3-(imidazol-4-yl)-2-oxopropyl phosphate + H2O. It functions in the pathway amino-acid biosynthesis; L-histidine biosynthesis; L-histidine from 5-phospho-alpha-D-ribose 1-diphosphate: step 6/9. This is Imidazoleglycerol-phosphate dehydratase from Acinetobacter baumannii (strain SDF).